The following is a 119-amino-acid chain: Protein TusC (119 aa).

Belongs to the DsrF/TusC family. In terms of assembly, heterohexamer, formed by a dimer of trimers. The hexameric TusBCD complex contains 2 copies each of TusB, TusC and TusD. The TusBCD complex interacts with TusE.

It is found in the cytoplasm. Functionally, part of a sulfur-relay system required for 2-thiolation of 5-methylaminomethyl-2-thiouridine (mnm(5)s(2)U) at tRNA wobble positions. The polypeptide is Protein TusC (Cronobacter sakazakii (strain ATCC BAA-894) (Enterobacter sakazakii)).